Consider the following 349-residue polypeptide: Phenylalanine--tRNA ligase alpha subunit (349 aa).

Glu-258 contributes to the Mg(2+) binding site.

Belongs to the class-II aminoacyl-tRNA synthetase family. Phe-tRNA synthetase alpha subunit type 1 subfamily. As to quaternary structure, tetramer of two alpha and two beta subunits. Mg(2+) serves as cofactor.

Its subcellular location is the cytoplasm. The catalysed reaction is tRNA(Phe) + L-phenylalanine + ATP = L-phenylalanyl-tRNA(Phe) + AMP + diphosphate + H(+). This is Phenylalanine--tRNA ligase alpha subunit from Rickettsia rickettsii (strain Sheila Smith).